Reading from the N-terminus, the 369-residue chain is Peptide chain release factor 2 (369 aa).

Gln250 is subject to N5-methylglutamine.

Belongs to the prokaryotic/mitochondrial release factor family. Post-translationally, methylated by PrmC. Methylation increases the termination efficiency of RF2.

The protein localises to the cytoplasm. In terms of biological role, peptide chain release factor 2 directs the termination of translation in response to the peptide chain termination codons UGA and UAA. The chain is Peptide chain release factor 2 (prfB) from Rickettsia prowazekii (strain Madrid E).